The sequence spans 540 residues: GMP synthase [glutamine-hydrolyzing] (540 aa).

Positions 24–217 constitute a Glutamine amidotransferase type-1 domain; it reads KILIVDFGSQ…VRKVAGLTGD (194 aa). Cysteine 101 acts as the Nucleophile in catalysis. Active-site residues include histidine 191 and glutamate 193. The region spanning 218 to 415 is the GMPS ATP-PPase domain; the sequence is WTMRAFREEA…LGLPEIFVGR (198 aa). Residue 245–251 participates in ATP binding; it reads SGGVDSS.

Homodimer.

It catalyses the reaction XMP + L-glutamine + ATP + H2O = GMP + L-glutamate + AMP + diphosphate + 2 H(+). Its pathway is purine metabolism; GMP biosynthesis; GMP from XMP (L-Gln route): step 1/1. Functionally, catalyzes the synthesis of GMP from XMP. This Nitrobacter hamburgensis (strain DSM 10229 / NCIMB 13809 / X14) protein is GMP synthase [glutamine-hydrolyzing].